We begin with the raw amino-acid sequence, 352 residues long: Holliday junction branch migration complex subunit RuvB (352 aa).

Residues 4-185 (ADRLIAATGP…FGIVQRLEFY (182 aa)) are large ATPase domain (RuvB-L). ATP is bound by residues Ile24, Arg25, Gly66, Lys69, Thr70, Thr71, 132-134 (EDF), Arg175, Tyr185, and Arg222. Thr70 contacts Mg(2+). The small ATPAse domain (RuvB-S) stretch occupies residues 186–256 (STADLATIVS…VADLALNLLD (71 aa)). The head domain (RuvB-H) stretch occupies residues 259 to 352 (EHGFDHQDRR…VDEFLDAVDD (94 aa)). Arg295, Arg314, and Arg319 together coordinate DNA.

This sequence belongs to the RuvB family. Homohexamer. Forms an RuvA(8)-RuvB(12)-Holliday junction (HJ) complex. HJ DNA is sandwiched between 2 RuvA tetramers; dsDNA enters through RuvA and exits via RuvB. An RuvB hexamer assembles on each DNA strand where it exits the tetramer. Each RuvB hexamer is contacted by two RuvA subunits (via domain III) on 2 adjacent RuvB subunits; this complex drives branch migration. In the full resolvosome a probable DNA-RuvA(4)-RuvB(12)-RuvC(2) complex forms which resolves the HJ.

It localises to the cytoplasm. It catalyses the reaction ATP + H2O = ADP + phosphate + H(+). In terms of biological role, the RuvA-RuvB-RuvC complex processes Holliday junction (HJ) DNA during genetic recombination and DNA repair, while the RuvA-RuvB complex plays an important role in the rescue of blocked DNA replication forks via replication fork reversal (RFR). RuvA specifically binds to HJ cruciform DNA, conferring on it an open structure. The RuvB hexamer acts as an ATP-dependent pump, pulling dsDNA into and through the RuvAB complex. RuvB forms 2 homohexamers on either side of HJ DNA bound by 1 or 2 RuvA tetramers; 4 subunits per hexamer contact DNA at a time. Coordinated motions by a converter formed by DNA-disengaged RuvB subunits stimulates ATP hydrolysis and nucleotide exchange. Immobilization of the converter enables RuvB to convert the ATP-contained energy into a lever motion, pulling 2 nucleotides of DNA out of the RuvA tetramer per ATP hydrolyzed, thus driving DNA branch migration. The RuvB motors rotate together with the DNA substrate, which together with the progressing nucleotide cycle form the mechanistic basis for DNA recombination by continuous HJ branch migration. Branch migration allows RuvC to scan DNA until it finds its consensus sequence, where it cleaves and resolves cruciform DNA. The protein is Holliday junction branch migration complex subunit RuvB of Pseudomonas fluorescens (strain SBW25).